Consider the following 369-residue polypeptide: Transmembrane protein 144 homolog A (369 aa).

10 consecutive transmembrane segments (helical) span residues 6-26, 35-55, 63-83, 85-105, 122-142, 221-241, 256-276, 288-308, 318-338, and 347-367; these read VIGY…YVPV, LSYA…AMMI, PIGI…IPII, LVGL…VGFF, DWMN…FFFI, VAGI…MIPM, IIFS…MFYA, TVFP…GLMI, GYPI…VFYF, and LLIL…LAFS.

The protein belongs to the TMEM144 family.

Its subcellular location is the membrane. The sequence is that of Transmembrane protein 144 homolog A (tmem144A) from Dictyostelium discoideum (Social amoeba).